We begin with the raw amino-acid sequence, 197 residues long: Protein TIFY 9 (197 aa).

Over residues S57–S73 the composition is skewed to polar residues. Positions S57 to I84 are disordered. The region spanning L98–E132 is the Tify domain. Positions P168 to Y193 match the Jas motif. The Nuclear localization signal motif lies at A170 to R177.

This sequence belongs to the TIFY/JAZ family. In terms of assembly, homo- and heterodimer. Interacts with MYC2, MYC3, MYC4, AFPH2/NINJA, TIFY10A/JAZ1, TIFY10B/JAZ2, TIFY6B/JAZ3, TIFY6A/JAZ4, TIFY11B/JAZ6, TIFY5A/JAZ8, TIFY7/JAZ9, TIFY3A/JAZ11 and TIFY3B/JAZ12. Isoform 1 and isoform 2 interact with COI1. Isoform 3 does not interact with COI1. Interacts with RHD6 and RSL1. Post-translationally, ubiquitinated. Targeted for degradation by the SCF(COI1) E3 ubiquitin ligase-proteasome pathway during jasmonate signaling.

It is found in the nucleus. Its function is as follows. Repressor of jasmonate (JA) responses that lacks the entire Jas domain and possesses severe JA insensitivity and resistance to JA-induced degradation. Acts as an endogenous repressor of JA signal output in JA-stimulated cells. Modulator of JA-controlled growth inhibition in response to wounding. Functionally, repressor of jasmonate (JA) responses that lacks part of the Jas domain and possesses JA insensitivity and partial resistance to JA-induced degradation. In terms of biological role, repressor of jasmonate (JA) responses. Interacts with and suppresses RHD6 and RSL1 transcription factor activities to negatively regulate jasmonate-stimulated root hair development. The polypeptide is Protein TIFY 9 (TIFY9) (Arabidopsis thaliana (Mouse-ear cress)).